We begin with the raw amino-acid sequence, 238 residues long: Enolase-phosphatase E1 (238 aa).

Mg(2+) is bound by residues Asp-14 and Glu-16. Residues 128–129 (SS) and Lys-165 each bind substrate. Residue Asp-192 participates in Mg(2+) binding.

The protein belongs to the HAD-like hydrolase superfamily. MasA/MtnC family. Monomer. Requires Mg(2+) as cofactor.

The protein resides in the cytoplasm. It is found in the nucleus. The catalysed reaction is 5-methylsulfanyl-2,3-dioxopentyl phosphate + H2O = 1,2-dihydroxy-5-(methylsulfanyl)pent-1-en-3-one + phosphate. Its pathway is amino-acid biosynthesis; L-methionine biosynthesis via salvage pathway; L-methionine from S-methyl-5-thio-alpha-D-ribose 1-phosphate: step 3/6. It functions in the pathway amino-acid biosynthesis; L-methionine biosynthesis via salvage pathway; L-methionine from S-methyl-5-thio-alpha-D-ribose 1-phosphate: step 4/6. Functionally, bifunctional enzyme that catalyzes the enolization of 2,3-diketo-5-methylthiopentyl-1-phosphate (DK-MTP-1-P) into the intermediate 2-hydroxy-3-keto-5-methylthiopentenyl-1-phosphate (HK-MTPenyl-1-P), which is then dephosphorylated to form the acireductone 1,2-dihydroxy-3-keto-5-methylthiopentene (DHK-MTPene). The protein is Enolase-phosphatase E1 of Fusarium vanettenii (strain ATCC MYA-4622 / CBS 123669 / FGSC 9596 / NRRL 45880 / 77-13-4) (Fusarium solani subsp. pisi).